The chain runs to 130 residues: S-adenosylmethionine decarboxylase proenzyme (130 aa).

The Schiff-base intermediate with substrate; via pyruvic acid role is filled by serine 63. Serine 63 is subject to Pyruvic acid (Ser); by autocatalysis. Catalysis depends on histidine 68, which acts as the Proton acceptor; for processing activity. Cysteine 83 (proton donor; for catalytic activity) is an active-site residue.

It belongs to the prokaryotic AdoMetDC family. Type 1 subfamily. In terms of assembly, heterotetramer of two alpha and two beta chains arranged as a dimer of alpha/beta heterodimers. Pyruvate serves as cofactor. Post-translationally, is synthesized initially as an inactive proenzyme. Formation of the active enzyme involves a self-maturation process in which the active site pyruvoyl group is generated from an internal serine residue via an autocatalytic post-translational modification. Two non-identical subunits are generated from the proenzyme in this reaction, and the pyruvate is formed at the N-terminus of the alpha chain, which is derived from the carboxyl end of the proenzyme. The post-translation cleavage follows an unusual pathway, termed non-hydrolytic serinolysis, in which the side chain hydroxyl group of the serine supplies its oxygen atom to form the C-terminus of the beta chain, while the remainder of the serine residue undergoes an oxidative deamination to produce ammonia and the pyruvoyl group blocking the N-terminus of the alpha chain.

It catalyses the reaction S-adenosyl-L-methionine + H(+) = S-adenosyl 3-(methylsulfanyl)propylamine + CO2. The protein operates within amine and polyamine biosynthesis; S-adenosylmethioninamine biosynthesis; S-adenosylmethioninamine from S-adenosyl-L-methionine: step 1/1. Its function is as follows. Catalyzes the decarboxylation of S-adenosylmethionine to S-adenosylmethioninamine (dcAdoMet), the propylamine donor required for the synthesis of the polyamines spermine and spermidine from the diamine putrescine. The protein is S-adenosylmethionine decarboxylase proenzyme of Thermotoga petrophila (strain ATCC BAA-488 / DSM 13995 / JCM 10881 / RKU-1).